The primary structure comprises 595 residues: MCTLQLHLLLLVVLMLSETARPQPSSTARAFPTSWGLEPVTPEVPTSAPPDSSESPTPWTLSMPVNATTDPFPALPICVCDLTPGTCDLNCCCDKDCDLLHPRTVFSFCLPGSVRSSSWVCVDNSLMFRSNSPFPSRVFTDSSGTTQFCVRVNNSKANYFQKLQTVNATNFQALAAEFGGQSFPSMPPETQPPVLFYRAGDPILTYYPSWSVVSLLRQPAAVGAGGLCAESNPAGFLESKSTTCPRFFRDLASSCTSEPALDAASYYNFRVLKVPRGVTDLQNMKFQVPVTLASQASPPLLAGNTCQNIVSQVVYEIETNGTFGIQKVSVSFRQTNLTVKPGVSLQQDFIVHFRAFQQRKAAAPAAPRSGNPGYLTGKPLLVLTGDTSHSMTLLQSEGNGLCSAKRHAVQFGVNAVSGCQLRPREVNCSHLQEEVYQTLHGRPRPEHVAVFGNADPAQRGGWTRILSRDCSVSAVNCTSCCLIPVSLEIQVLWAHLGLQSNPQAHVAGARFLYQCKSVQEHQRGIEVSLTTLVNFVDITQKPEPPRDQPRIDWKLPFDFFFPFKAALSRGASVQKDSLVLILCVLLLGLLNSQTK.

Residues 1 to 22 form the signal peptide; that stretch reads MCTLQLHLLLLVVLMLSETARP. A disordered region spans residues 23-62; it reads QPSSTARAFPTSWGLEPVTPEVPTSAPPDSSESPTPWTLS. At 23–575 the chain is on the extracellular side; that stretch reads QPSSTARAFP…ALSRGASVQK (553 aa). Over residues 49–62 the composition is skewed to polar residues; the sequence is PPDSSESPTPWTLS. N-linked (GlcNAc...) asparagine glycans are attached at residues N167 and N336. Residues 576–594 traverse the membrane as a helical segment; it reads DSLVLILCVLLLGLLNSQT. A topological domain (cytoplasmic) is located at residue K595.

Belongs to the tectonic family. Part of the tectonic-like complex (also named B9 complex).

The protein resides in the membrane. Part of the tectonic-like complex which is required for tissue-specific ciliogenesis and may regulate ciliary membrane composition. May be involved in apoptosis regulation. Necessary for signal transduction through the sonic hedgehog (Shh) signaling pathway. The chain is Tectonic-3 (Tctn3) from Mus musculus (Mouse).